The following is a 356-amino-acid chain: Kelch domain-containing protein VC_1773 (356 aa).

Kelch repeat units lie at residues Lys72–Pro125, Thr163–Asn210, Asn288–Gly331, and Ala333–Met355.

This chain is Kelch domain-containing protein VC_1773, found in Vibrio cholerae serotype O1 (strain ATCC 39315 / El Tor Inaba N16961).